The chain runs to 397 residues: Vacuolar protein sorting-associated protein 37A (397 aa).

Positions 1–22 (MSWLFPLTKSASSSAAGSPGGL) are disordered. Phosphoserine is present on serine 18. In terms of domain architecture, VPS37 C-terminal spans 308-397 (KSTFEKKMQR…AMHSQFHAPL (90 aa)).

Belongs to the VPS37 family. As to quaternary structure, component of the ESCRT-I complex (endosomal sorting complex required for transport I) which consists of TSG101, VPS28, a VPS37 protein (VPS37A to -D) and MVB12A or MVB12B in a 1:1:1:1 stoichiometry. Interacts with TSG101, VPS28 and HGS. Component of an ESCRT-I complex (endosomal sorting complex required for transport I) which consists of TSG101, VPS28, VPS37A and UBAP1 in a 1:1:1:1 stoichiometry. Widely expressed. Examined tissues include heart, brain, placenta, liver, skeletal muscle, kidney and pancreas. More abundant in liver. Strongly decreased or undetected in hepatomas.

It localises to the late endosome membrane. Its subcellular location is the nucleus. In terms of biological role, component of the ESCRT-I complex, a regulator of vesicular trafficking process. Required for the sorting of endocytic ubiquitinated cargos into multivesicular bodies. May be involved in cell growth and differentiation. This is Vacuolar protein sorting-associated protein 37A (VPS37A) from Homo sapiens (Human).